The chain runs to 393 residues: S-adenosylmethionine synthase (393 aa).

Glu9 is a Mg(2+) binding site. His15 serves as a coordination point for ATP. Asp17 serves as a coordination point for Mg(2+). Glu43 contributes to the K(+) binding site. Residues Glu56 and Gln99 each contribute to the L-methionine site. Residues 167-169 (DGK), 235-238 (SGRF), Asp246, 252-253 (RK), Ala269, Lys273, and Lys277 contribute to the ATP site. Asp246 provides a ligand contact to L-methionine. Residue Lys277 coordinates L-methionine.

Belongs to the AdoMet synthase family. Homotetramer; dimer of dimers. Mn(2+) is required as a cofactor. It depends on Mg(2+) as a cofactor. Co(2+) serves as cofactor. Requires K(+) as cofactor.

The protein resides in the cytoplasm. It catalyses the reaction L-methionine + ATP + H2O = S-adenosyl-L-methionine + phosphate + diphosphate. It participates in amino-acid biosynthesis; S-adenosyl-L-methionine biosynthesis; S-adenosyl-L-methionine from L-methionine: step 1/1. Its activity is regulated as follows. Increased activity in the presence of 25 percent acetonitrile, methanol or dimethylformamide. Functionally, catalyzes the formation of S-adenosylmethionine from methionine and ATP. This is S-adenosylmethionine synthase from Acacia koa (Koa tree).